The following is a 74-amino-acid chain: Heat shock factor-binding protein 1-like protein 1 (74 aa).

Residues 12–65 (RALRDAAENLFQELQEHFQALTATLNLRMEEMGNRIEDLQKNVKDLMVQAGIEN) adopt a coiled-coil conformation.

It belongs to the HSBP1 family.

This is Heat shock factor-binding protein 1-like protein 1 (HSBP1L1) from Homo sapiens (Human).